Reading from the N-terminus, the 1229-residue chain is MEEKTKTVPFYKLFSFSDSTDVLLMIVGSIGAIGNGVGFPLMTLLFGDLIDSIGQNQSNKDIVEIVSKVCLKFVYLGLGTLGAAFLQVACWMITGERQAARIRSLYLKTILRQDIGFFDVETSTGEVVGRMSGDTVLILEAMGEKVGKFIQLIATFVGGFVLAFVKGWLLTLVMLVSIPLLAIAGAAMPIIVTRASSREQAAYAKASTVVEQTLGSIRTVASFTGEKQAMKSYREFINLAYRASVKQGFSMGLGLGVVFFVFFCSYALAIWFGGEMILKKGYTGGEVVNVMVTVVASSMSLGQTTPCLTAFAAGKAAAYKMFETIERKPSIDAFDLNGKVLEDIRGEIELRDVCFSYPARPMEEVFGGFSLLIPSGATAALVGESGSGKSSVISLIERFYDPSSGSVLIDGVNLKEFQLKWIRGKIGLVSQEPVLFSSSIMENIGYGKENATVEEIQAAAKLANAANFIDKLPRGLETLVGEHGTQLSGGQKQRIAIARAILKDPRILLLDEATSALDAESERVVQEALDRVMMSRTTVIVAHRLSTVRNADMIAVIHRGKIVEEGSHSELLKDHEGAYAQLIRLQKIKKEPKRLESSNELRDRSINRGSSRNIRTRVHDDDSVSVLGLLGRQENTEISREQSRNVSITRIAALNKPETTILILGTLLGAVNGTIFPIFGILFAKVIEAFFKPPHDMKRDSRFWSMIFVLLGVASLIVYPMHTYLFAVAGGRLIQRIRVMCFEKVVHMEVGWFDDPENSSGTIGSRLSADAALIKTLVGDSLSLSVKNAAAAVSGLIIAFTASWKLAVIILVMIPLIGINGYLQIKFIKGFTADAKAKYEEASQVANDAVGSIRTVASFCAEEKVMEMYKKRCEDTIKSGIKQGLISGVGFGISFFVLYSVYASCFYVGARLVKAGRTNFNDVFQVFLALTMTAIGISQASSFAPDSSKAKGAAASIFGIIDGKSMIDSRDESGLVLENVKGDIELCHISFTYQTRPDVQIFRDLCFAIRAGQTVALVGESGSGKSTVISLLQRFYDPDSGHITLDRVELKKLQLKWVRQQMGLVGQEPVLFNDTIRSNIAYGKGGDEASEAEIIAAAELANAHGFISSIQQGYDTVVGERGIQLSGGQKQRVAIARAIVKEPKILLLDEATSALDAESERVVQDALDRVMVNRTTVVVAHRLSTIKNADVIAVVKNGVIVEKGTHETLINIEGGVYASLVQLHISASS.

A helical membrane pass occupies residues 22–42; sequence VLLMIVGSIGAIGNGVGFPLM. An ABC transmembrane type-1 1 domain is found at 25-313; sequence MIVGSIGAIG…TTPCLTAFAA (289 aa). N-linked (GlcNAc...) asparagine glycosylation is present at asparagine 56. The next 5 helical transmembrane spans lie at 73–93, 149–169, 172–192, 252–272, and 281–301; these read FVYL…CWMI, FIQL…KGWL, LVML…PIIV, GLGL…AIWF, and GYTG…SMSL. Residues 348-584 form the ABC transporter 1 domain; the sequence is IELRDVCFSY…HEGAYAQLIR (237 aa). Residue 383-390 coordinates ATP; it reads GESGSGKS. Asparagine 450 carries an N-linked (GlcNAc...) asparagine glycan. Residues 594–606 show a composition bias toward basic and acidic residues; that stretch reads RLESSNELRDRSI. The segment at 594-614 is disordered; that stretch reads RLESSNELRDRSINRGSSRNI. Asparagine 645 carries N-linked (GlcNAc...) asparagine glycosylation. 2 helical membrane passes run 661–681 and 706–726; these read ILIL…IFGI and MIFV…TYLF. The ABC transmembrane type-1 2 domain maps to 662–949; the sequence is LILGTLLGAV…ASSFAPDSSK (288 aa). N-linked (GlcNAc...) asparagine glycosylation is present at asparagine 758. A run of 3 helical transmembrane segments spans residues 797 to 817, 888 to 908, and 923 to 943; these read IIAF…IPLI, GVGF…CFYV, and VFQV…ASSF. Positions 984–1222 constitute an ABC transporter 2 domain; it reads IELCHISFTY…EGGVYASLVQ (239 aa). Residue 1019–1026 participates in ATP binding; sequence GESGSGKS. Residues asparagine 1073 and asparagine 1173 are each glycosylated (N-linked (GlcNAc...) asparagine).

Belongs to the ABC transporter superfamily. ABCB family. Multidrug resistance exporter (TC 3.A.1.201) subfamily.

The protein resides in the membrane. The sequence is that of ABC transporter B family member 3 (ABCB3) from Arabidopsis thaliana (Mouse-ear cress).